Consider the following 525-residue polypeptide: ESX-1 secretion-associated protein EspE (525 aa).

2 disordered regions span residues A244–A341 and A375–H494. Residues D248–A258 are compositionally biased toward acidic residues. The span at E274–N286 shows a compositional bias: basic and acidic residues. The segment covering S292–A306 has biased composition (gly residues). Low complexity-rich tracts occupy residues P307–P319, T332–A341, and A375–P397. Basic and acidic residues predominate over residues D411 to T440.

It localises to the cytoplasm. This chain is ESX-1 secretion-associated protein EspE, found in Mycolicibacterium smegmatis (strain ATCC 700084 / mc(2)155) (Mycobacterium smegmatis).